Reading from the N-terminus, the 64-residue chain is Large ribosomal subunit protein bL35 (64 aa).

Composition is skewed to basic residues over residues M1–R15 and V23–L33. The segment at M1–R47 is disordered. Basic and acidic residues predominate over residues E34 to G46.

Belongs to the bacterial ribosomal protein bL35 family.

This Mycobacteroides abscessus (strain ATCC 19977 / DSM 44196 / CCUG 20993 / CIP 104536 / JCM 13569 / NCTC 13031 / TMC 1543 / L948) (Mycobacterium abscessus) protein is Large ribosomal subunit protein bL35.